Here is a 67-residue protein sequence, read N- to C-terminus: Large ribosomal subunit protein bL35 (67 aa).

Belongs to the bacterial ribosomal protein bL35 family.

In Deinococcus geothermalis (strain DSM 11300 / CIP 105573 / AG-3a), this protein is Large ribosomal subunit protein bL35.